Here is a 461-residue protein sequence, read N- to C-terminus: MLKIFNTLTRQKEEFKPIHAGEVGMYVCGITVYDLCHIGHGRTFVAFDVVARYLRFLGYKLKYVRNITDIDDKIIKRANENGESFVALVDRMIAEMHKDFDALNILRPDMEPRATHHIAEIIELTEQLIAKGHAYVADNGDVMFDVPTDPTYGVLSRQDLDQLQAGARVDVVDDKRNPMDFVLWKMSKEGEPSWPSPWGAGRPGWHIECSAMNCKQLGNHFDIHGGGSDLMFPHHENEIAQSTCAHDGRYVNYWMHSGMVMVDREKMSKSLGNFFTVRDVLKYYDAETVRYFLMSGHYRSQLNYSEENLKQARAALERLYTALRGTDKTVAPAGGEAFEARFIEAMDDDFNTPEAYSVLFDMAREVNRLKAEDMAAANAMASHLRKLSAVLGLLEQEPEAFLQSGAQADDSEVAEIEALIQQRLDARKAKDWAAADAARDRLNEMGIVLEDGPQGTTWRRK.

Residue Cys-28 coordinates Zn(2+). The 'HIGH' region signature appears at 30–40; that stretch reads ITVYDLCHIGH. 3 residues coordinate Zn(2+): Cys-209, His-234, and Glu-238. Positions 266-270 match the 'KMSKS' region motif; sequence KMSKS. ATP is bound at residue Lys-269.

The protein belongs to the class-I aminoacyl-tRNA synthetase family. Monomer. The cofactor is Zn(2+).

It is found in the cytoplasm. It carries out the reaction tRNA(Cys) + L-cysteine + ATP = L-cysteinyl-tRNA(Cys) + AMP + diphosphate. The sequence is that of Cysteine--tRNA ligase from Escherichia coli O127:H6 (strain E2348/69 / EPEC).